Reading from the N-terminus, the 138-residue chain is Sporulation-specific cell division protein SsgB (138 aa).

It belongs to the SsgA family. Monomer. Interacts with SsgA. Interacts with FtsZ (via N-terminus).

Its subcellular location is the cell septum. Involved in sporulation-specific cell division. Required for early stages of sporulation. Important in the process of growth cessation prior to sporulation-specific cell division. Recruits cell division protein FtsZ to the future septum sites and tethers the contractile ring structure (Z ring) to the cytoplasmic membrane during sporulation. Stimulates polymerization and filament length of FtsZ in vitro. The polypeptide is Sporulation-specific cell division protein SsgB (Thermobifida fusca (strain YX)).